The primary structure comprises 130 residues: Small ribosomal subunit protein uS11 (130 aa).

The protein belongs to the universal ribosomal protein uS11 family. Part of the 30S ribosomal subunit. Interacts with proteins S7 and S18. Binds to IF-3.

Functionally, located on the platform of the 30S subunit, it bridges several disparate RNA helices of the 16S rRNA. Forms part of the Shine-Dalgarno cleft in the 70S ribosome. The protein is Small ribosomal subunit protein uS11 of Campylobacter curvus (strain 525.92).